Here is a 418-residue protein sequence, read N- to C-terminus: Peptide chain release factor subunit 1 (418 aa).

The protein belongs to the eukaryotic release factor 1 family. As to quaternary structure, heterodimer of two subunits, one of which binds GTP.

The protein localises to the cytoplasm. In terms of biological role, directs the termination of nascent peptide synthesis (translation) in response to the termination codons UAA, UAG and UGA. The polypeptide is Peptide chain release factor subunit 1 (Haloarcula marismortui (strain ATCC 43049 / DSM 3752 / JCM 8966 / VKM B-1809) (Halobacterium marismortui)).